Here is an 83-residue protein sequence, read N- to C-terminus: Cytochrome b559 subunit alpha (83 aa).

The helical transmembrane segment at 22-36 (VIHAVTLPAIFLAGF) threads the bilayer. Heme is bound at residue His-24.

Belongs to the PsbE/PsbF family. Heterodimer of an alpha subunit and a beta subunit. PSII is composed of 1 copy each of membrane proteins PsbA, PsbB, PsbC, PsbD, PsbE, PsbF, PsbH, PsbI, PsbJ, PsbK, PsbL, PsbM, PsbT, PsbX, PsbY, PsbZ, Psb30/Ycf12, peripheral proteins PsbO, CyanoQ (PsbQ), PsbU, PsbV and a large number of cofactors. It forms dimeric complexes. Heme b is required as a cofactor.

It localises to the cellular thylakoid membrane. Functionally, this b-type cytochrome is tightly associated with the reaction center of photosystem II (PSII). PSII is a light-driven water:plastoquinone oxidoreductase that uses light energy to abstract electrons from H(2)O, generating O(2) and a proton gradient subsequently used for ATP formation. It consists of a core antenna complex that captures photons, and an electron transfer chain that converts photonic excitation into a charge separation. This chain is Cytochrome b559 subunit alpha, found in Synechococcus sp. (strain RCC307).